A 269-amino-acid polypeptide reads, in one-letter code: Novel plant SNARE 13 (269 aa).

Over methionine 1–cysteine 217 the chain is Cytoplasmic. Residues aspartate 33 to serine 94 are a coiled coil. At serine 74 the chain carries Phosphoserine. Residues methionine 146–isoleucine 208 enclose the t-SNARE coiled-coil homology domain. A helical; Anchor for type IV membrane protein transmembrane segment spans residues isoleucine 218–valine 238. The Vesicular segment spans residues asparagine 239–methionine 269.

The protein belongs to the novel plant SNARE family.

The protein localises to the membrane. In terms of biological role, vesicle trafficking protein that functions in the secretory pathway. This chain is Novel plant SNARE 13 (NPSN13), found in Arabidopsis thaliana (Mouse-ear cress).